The following is a 1038-amino-acid chain: MPVSMAVCETANVVNAALRESLGGNSSAGSSTDQAKSGEDTNGSLQNHIVANAKRILMAKIEYEEVPNYHESVLENLKSKYIVIKPGNPGAINGFSGKNNTGKLVGANGHDNNGARKQAEHPNNQSHHINHHNHQHPTSNPNELPKPKRVLYPRENIRIGWKQSERKWQVGTGMINVGNTCYLNSTLQALLHIPALANWLVSEQAHLADCNVAEPGSGCIICAMTKTLLATQSNQSAVRPFLIYSKLKQICKHMVVGRQEDAHEFLRFLVEAMERAYLMRFRNYKELDQLVKETTPLGQIFGGYLRSEVRCLSCNHVSITFQHFQDLLLDIRKADSLEDAFEGHFSRERLEDMGYKCEGCKKKVSATKQFSLERAPITLCIQLKRFSMIGNKLTKQISFKSRIDLSKYAARSQAAQAQPLTYRLVSMVTHLGASQHCGHYTAIGSTDTGSFYNFDDSYVRPIAMHSVCNTNAYIMFFELDLSQAASPAANRPNGVRLTNGHSTTPVPAATVSSPSPTRFIGPQLPAGGANGYTNGNAQKTAIQFKQQNQQSPQNGLQLGTGKFQDTAKPPLVGAHAKGEATSAPTANGNKSSSPSSNSSSNHKSINQQQYLPISSDDEDIEDEMKPRPTTAQLPSMPNMTENHTEPKAKSPVKIQVKTPVKTPLKSLVPYESASEEEEAPLPNPRKRPSGEDSSESDQESGQTNGHSKTNGSHTNGSASSSVHVNNSKQKTDAIDEIFKSLKKSADSDEDDDEEEPSIQLTNGWHPQKQSQSQSKAPPSPKTPPSPAVIKSKTGIWKVTRNDEVDAIEDDVDVVVVEGSPVKIPTPNKNHRNPFSSSKPSTDSPATPGAKRQKLLNGSALKSHQQPRVGNGYQSNATSNGSTINELLKQSYRGYGSPVLSWNGKPAELEKELLVDAREQRQRDIDDDEENEMDRGRQRKVKSGSAKGNNASNSTPGYNPFQEYEGQKRWNKNGGGGGFPRFYNQNYRQNFQQRNKFKFNRFGGPGSAKFQQQRALQRHLSAGGGFSRRQPSAQQQQQT.

2 disordered regions span residues 22–44 (LGGNSSAGSSTDQAKSGEDTNGS) and 107–148 (ANGH…PKPK). Positions 23–44 (GGNSSAGSSTDQAKSGEDTNGS) are enriched in polar residues. The USP domain occupies 172–480 (TGMINVGNTC…NAYIMFFELD (309 aa)). Cys181 serves as the catalytic Nucleophile. Catalysis depends on His439, which acts as the Proton acceptor. Disordered regions lie at residues 487 to 794 (PAAN…SKTG), 818 to 881 (GSPV…SNGS), 912 to 985 (LLVD…YNQN), and 1000 to 1038 (RFGGPGSAKFQQQRALQRHLSAGGGFSRRQPSAQQQQQT). Composition is skewed to low complexity over residues 502–517 (STTPVPAATVSSPSPT), 546–559 (QQNQQSPQNGLQLG), and 587–606 (NGNKSSSPSSNSSSNHKSIN). Phosphoserine is present on residues Ser513 and Ser515. Over residues 629–641 (TTAQLPSMPNMTE) the composition is skewed to polar residues. Thr658 and Thr662 each carry phosphothreonine. Residues Ser672 and Ser674 each carry the phosphoserine modification. Residues 703–728 (TNGHSKTNGSHTNGSASSSVHVNNSK) are compositionally biased toward polar residues. Residues 729–746 (QKTDAIDEIFKSLKKSAD) are compositionally biased toward basic and acidic residues. The residue at position 747 (Ser747) is a Phosphoserine. The span at 747 to 756 (SDEDDDEEEP) shows a compositional bias: acidic residues. Residues 766–776 (PQKQSQSQSKA) are compositionally biased toward low complexity. Positions 777-786 (PPSPKTPPSP) are enriched in pro residues. Ser779 is modified (phosphoserine). Thr782 carries the phosphothreonine modification. Ser785 and Ser819 each carry phosphoserine. Thr825 carries the post-translational modification Phosphothreonine. Over residues 832–844 (NPFSSSKPSTDSP) the composition is skewed to polar residues. Ser843 is modified (phosphoserine). Thr846 is subject to Phosphothreonine. A compositionally biased stretch (polar residues) spans 859–881 (ALKSHQQPRVGNGYQSNATSNGS). The span at 912-923 (LLVDAREQRQRD) shows a compositional bias: basic and acidic residues. Residues 942–953 (SGSAKGNNASNS) are compositionally biased toward low complexity.

It belongs to the peptidase C19 family. As to quaternary structure, interacts with atms/PAF1, but not with CycT. Interacts (via C-terminus) with imd (via N-terminus).

The protein resides in the nucleus. It localises to the nucleolus. It is found in the cytoplasm. The catalysed reaction is Thiol-dependent hydrolysis of ester, thioester, amide, peptide and isopeptide bonds formed by the C-terminal Gly of ubiquitin (a 76-residue protein attached to proteins as an intracellular targeting signal).. Its function is as follows. Hydrolase that deubiquitinates polyubiquitinated target proteins including imd. Required for preventing the constitutive activation of the imd/NF-kappa-B (Imd) signaling cascade under unchalleneged conditions. Deubiquitinates imd linked 'Lys-63' chains which leads its proteasomal degradation and consequently down-regulation of the Imd signaling cascade. Removal of the activating 'Lys-63'-linked chains is likely to enable their replacement with 'Lys-48'-linked chains which act as 'tags' the for proteasomal degradation of imd. Required for maintaining multiple types of adult stem cells, including male and female germline, epithelial follicle cell and intestinal stem cells. May function as a transcriptional repressor by continually deubiquiting histone H2B at the promoters of genes critical for cellular differentiation, thereby preventing histone H3 'Lys-4' trimethylation (H3K4me3). Controls selective autophagy activation by ubiquitinated proteins. This chain is Ubiquitin carboxyl-terminal hydrolase 36 (scny), found in Drosophila melanogaster (Fruit fly).